The primary structure comprises 555 residues: Formate--tetrahydrofolate ligase (555 aa).

ATP is bound at residue 65–72 (TPAGEGKS).

It belongs to the formate--tetrahydrofolate ligase family.

It catalyses the reaction (6S)-5,6,7,8-tetrahydrofolate + formate + ATP = (6R)-10-formyltetrahydrofolate + ADP + phosphate. Its pathway is one-carbon metabolism; tetrahydrofolate interconversion. This is Formate--tetrahydrofolate ligase from Lactococcus lactis subsp. lactis (strain IL1403) (Streptococcus lactis).